Consider the following 542-residue polypeptide: Neutral amino acid transporter B(0) (542 aa).

An N-acetylmethionine modification is found at Met-1. The Cytoplasmic portion of the chain corresponds to 1–52 (MVADPPRGDSKGLAAAEPTANGGLALASIEDQGEAAGGCCGSRDRVRRCLRA). A helical membrane pass occupies residues 53–82 (NLLVLLTVVAVVVGVALGLGVSGAGGALAL). Over 83-95 (GPERLSAFVFPGE) the chain is Extracellular. The chain crosses the membrane as a helical span at residues 96-117 (LLLRLLRMIILPLVVCSLIGGA). Topologically, residues 118 to 131 (ASLDPGALGRLGAW) are cytoplasmic. A helical membrane pass occupies residues 132-154 (ALLFFLVTTLLASALGVALALAL). Residues 155–225 (QPGAASAAIN…GTRVKVPVGQ (71 aa)) are Extracellular-facing. N-linked (GlcNAc...) asparagine glycosylation is found at Asn-164 and Asn-213. Residues 226 to 249 (EVEGMNILGLVVFAIVFGVALRKL) traverse the membrane as a helical segment. Residues 250 to 258 (GPEGELLIR) are Cytoplasmic-facing. Residues 259–286 (FFNSFNEATMVLVSWIMWYAPVGIMFLV) form a helical membrane-spanning segment. Residues 287 to 307 (AGKIVEMEDVGLLFARLGKYI) are Extracellular-facing. A helical transmembrane segment spans residues 308–329 (LCCLLGHAIHGLLVLPLIYFLF). Topologically, residues 330 to 334 (TRKNP) are cytoplasmic. Positions 335-365 (YRFLWGIVTPLATAFGTSSSSATLPLMMKCV) form an intramembrane region, discontinuously helical. At 366-374 (EENNGVAKH) the chain is on the cytoplasmic side. A helical membrane pass occupies residues 375 to 401 (ISRFILPIGATVNMDGAALFQCVAAVF). Positions 383, 385, and 387 each coordinate Na(+). Residues 402–414 (IAQLSEQSLDFVK) are Extracellular-facing. Residues 415 to 448 (IITILVTATASSVGAAGIPAGGVLTLAIILEAVN) constitute an intramembrane region (discontinuously helical). Over 449 to 461 (LPVDHISLILAVD) the chain is Extracellular. The chain crosses the membrane as a helical span at residues 462-483 (WLVDRSCTVLNVEGDALGAGLL). Positions 472 and 476 each coordinate Na(+). Residues 484 to 542 (QNYVDRTEVRSTEPELIQVKSELPLDPLPAPTEEGNPLLRHYRGPAGDATVASEKESVM) lie on the Cytoplasmic side of the membrane. Position 494 is a phosphoserine (Ser-494). Thr-495 is subject to Phosphothreonine. 3 positions are modified to phosphoserine: Ser-504, Ser-536, and Ser-540. The tract at residues 509–542 (DPLPAPTEEGNPLLRHYRGPAGDATVASEKESVM) is disordered.

It belongs to the dicarboxylate/amino acid:cation symporter (DAACS) (TC 2.A.23) family. SLC1A5 subfamily. In terms of assembly, homotrimer.

It is found in the cell membrane. Its subcellular location is the melanosome. It catalyses the reaction L-glutamine(out) + L-serine(in) + Na(+)(out) = L-glutamine(in) + L-serine(out) + Na(+)(in). The enzyme catalyses L-glutamine(in) + L-serine(out) + Na(+)(out) = L-glutamine(out) + L-serine(in) + Na(+)(in). The catalysed reaction is L-threonine(in) + L-glutamine(out) + Na(+)(out) = L-threonine(out) + L-glutamine(in) + Na(+)(in). It carries out the reaction L-threonine(out) + L-glutamine(in) + Na(+)(out) = L-threonine(in) + L-glutamine(out) + Na(+)(in). It catalyses the reaction L-asparagine(in) + L-glutamine(out) + Na(+)(out) = L-asparagine(out) + L-glutamine(in) + Na(+)(in). The enzyme catalyses L-asparagine(out) + L-glutamine(in) + Na(+)(out) = L-asparagine(in) + L-glutamine(out) + Na(+)(in). The catalysed reaction is L-glutamine(in) + L-alanine(out) + Na(+)(out) = L-glutamine(out) + L-alanine(in) + Na(+)(in). It carries out the reaction L-valine(out) + L-glutamine(in) + Na(+)(out) = L-valine(in) + L-glutamine(out) + Na(+)(in). It catalyses the reaction L-glutamine(in) + L-methionine(out) + Na(+)(out) = L-glutamine(out) + L-methionine(in) + Na(+)(in). The enzyme catalyses L-glutamine(in) + L-glutamate(out) + Na(+)(out) + H(+)(out) = L-glutamine(out) + L-glutamate(in) + Na(+)(in) + H(+)(in). The catalysed reaction is D-serine(in) + L-glutamine(out) + Na(+)(out) = D-serine(out) + L-glutamine(in) + Na(+)(in). It carries out the reaction D-serine(in) + L-alanine(out) + Na(+)(out) = D-serine(out) + L-alanine(in) + Na(+)(in). It catalyses the reaction nitrate(in) = nitrate(out). The enzyme catalyses iodide(out) = iodide(in). The catalysed reaction is thiocyanate(in) = thiocyanate(out). In terms of biological role, sodium-coupled antiporter of neutral amino acids. In a tri-substrate transport cycle, exchanges neutral amino acids between the extracellular and intracellular compartments, coupled to the inward cotransport of at least one sodium ion. The preferred substrate is the essential amino acid L-glutamine, a precursor for biosynthesis of proteins, nucleotides and amine sugars as well as an alternative fuel for mitochondrial oxidative phosphorylation. Exchanges L-glutamine with other neutral amino acids such as L-serine, L-threonine and L-asparagine in a bidirectional way. Provides L-glutamine to proliferating stem and activated cells driving the metabolic switch toward cell differentiation. The transport cycle is usually pH-independent, with the exception of L-glutamate. Transports extracellular L-glutamate coupled to the cotransport of one proton and one sodium ion in exchange for intracellular L-glutamine counter-ion. May provide for L-glutamate uptake in glial cells regulating glutamine/glutamate cycle in the nervous system. Can transport D-amino acids. Mediates D-serine release from the retinal glia potentially affecting NMDA receptor function in retinal neurons. Displays sodium- and amino acid-dependent but uncoupled channel-like anion conductance with a preference SCN(-) &gt;&gt; NO3(-) &gt; I(-) &gt; Cl(-). Through binding of the fusogenic protein syncytin-1/ERVW-1 may mediate trophoblasts syncytialization, the spontaneous fusion of their plasma membranes, an essential process in placental development. This Macaca fascicularis (Crab-eating macaque) protein is Neutral amino acid transporter B(0) (SLC1A5).